The following is a 477-amino-acid chain: Aspartyl/glutamyl-tRNA(Asn/Gln) amidotransferase subunit B (477 aa).

This sequence belongs to the GatB/GatE family. GatB subfamily. As to quaternary structure, heterotrimer of A, B and C subunits.

The enzyme catalyses L-glutamyl-tRNA(Gln) + L-glutamine + ATP + H2O = L-glutaminyl-tRNA(Gln) + L-glutamate + ADP + phosphate + H(+). It catalyses the reaction L-aspartyl-tRNA(Asn) + L-glutamine + ATP + H2O = L-asparaginyl-tRNA(Asn) + L-glutamate + ADP + phosphate + 2 H(+). In terms of biological role, allows the formation of correctly charged Asn-tRNA(Asn) or Gln-tRNA(Gln) through the transamidation of misacylated Asp-tRNA(Asn) or Glu-tRNA(Gln) in organisms which lack either or both of asparaginyl-tRNA or glutaminyl-tRNA synthetases. The reaction takes place in the presence of glutamine and ATP through an activated phospho-Asp-tRNA(Asn) or phospho-Glu-tRNA(Gln). The protein is Aspartyl/glutamyl-tRNA(Asn/Gln) amidotransferase subunit B of Legionella pneumophila (strain Lens).